A 153-amino-acid polypeptide reads, in one-letter code: MRCPFCHNQDTRVIDSRAAEEGTAIRRRRSCPACERRFTTQETVLLMVTKRSGATEPFSRSKIIAGVRRACQGRPVTEDALALLGQRVEEEIRSRGVAEVSSHEIGLTILGPLRDLDEVAYLRFASVYRSFESLEDFEREIAELRAERTATQG.

The segment at 3–34 (CPFCHNQDTRVIDSRAAEEGTAIRRRRSCPAC) is a zinc-finger region. Residues 46 to 136 (LMVTKRSGAT…VYRSFESLED (91 aa)) form the ATP-cone domain.

It belongs to the NrdR family. It depends on Zn(2+) as a cofactor.

Negatively regulates transcription of bacterial ribonucleotide reductase nrd genes and operons by binding to NrdR-boxes. This Thermobifida fusca (strain YX) protein is Transcriptional repressor NrdR.